A 192-amino-acid chain; its full sequence is A-type ATP synthase subunit E (192 aa).

Belongs to the V-ATPase E subunit family. In terms of assembly, has multiple subunits with at least A(3), B(3), C, D, E, F, H, I and proteolipid K(x).

Its subcellular location is the cell membrane. Its function is as follows. Component of the A-type ATP synthase that produces ATP from ADP in the presence of a proton gradient across the membrane. The protein is A-type ATP synthase subunit E of Methanocorpusculum labreanum (strain ATCC 43576 / DSM 4855 / Z).